The sequence spans 300 residues: Putative glycosyltransferase ORF300 (300 aa).

Belongs to the glycosyltransferase group 1 family. Glycosyltransferase 4 subfamily.

In Acidianus hospitalis (AFV-1), this protein is Putative glycosyltransferase ORF300.